Consider the following 256-residue polypeptide: 3-methyl-2-oxobutanoate hydroxymethyltransferase (256 aa).

Mg(2+)-binding residues include D42 and D86. 3-methyl-2-oxobutanoate contacts are provided by residues 42–43, D86, and K116; that span reads DS. E118 serves as a coordination point for Mg(2+). The active-site Proton acceptor is E185.

The protein belongs to the PanB family. As to quaternary structure, homodecamer; pentamer of dimers. It depends on Mg(2+) as a cofactor.

It is found in the cytoplasm. It carries out the reaction 3-methyl-2-oxobutanoate + (6R)-5,10-methylene-5,6,7,8-tetrahydrofolate + H2O = 2-dehydropantoate + (6S)-5,6,7,8-tetrahydrofolate. Its pathway is cofactor biosynthesis; (R)-pantothenate biosynthesis; (R)-pantoate from 3-methyl-2-oxobutanoate: step 1/2. In terms of biological role, catalyzes the reversible reaction in which hydroxymethyl group from 5,10-methylenetetrahydrofolate is transferred onto alpha-ketoisovalerate to form ketopantoate. This Prochlorococcus marinus (strain SARG / CCMP1375 / SS120) protein is 3-methyl-2-oxobutanoate hydroxymethyltransferase.